The sequence spans 431 residues: Glycolipid 2-alpha-mannosyltransferase 1 (431 aa).

The Cytoplasmic portion of the chain corresponds to 1-9 (MASTRSNAR). Residues 10–28 (LIRFGIFALVLIGCGYILT) traverse the membrane as a helical; Signal-anchor for type II membrane protein segment. Residues 29–431 (RGSSFQPPNY…RQKGWEKYTA (403 aa)) are Lumenal-facing. Residues 35 to 44 (PPNYQQTQSP) are compositionally biased toward polar residues. The tract at residues 35 to 73 (PPNYQQTQSPAAHEKQTGNVAAGGGAGSGSAGAQVPLGK) is disordered. Residues 55 to 64 (AAGGGAGSGS) show a composition bias toward gly residues. Glutamate 318 functions as the Nucleophile in the catalytic mechanism.

Belongs to the glycosyltransferase 15 family.

The protein localises to the golgi apparatus membrane. It functions in the pathway protein modification; protein glycosylation. Involved in O-glycosylation of cell wall and secreted proteins. Transfers an alpha-D-mannosyl residue from GDP-mannose into lipid-linked oligosaccharide, forming an alpha-(1-&gt;2)-D-mannosyl-D-mannose linkage. Mainly responsible for the addition of the second mannose residue in an O-linked mannose pentamer. Can also substitute for MNT2 by adding the third mannose residue. Important for adherence to host surfaces and for virulence. This Candida albicans (strain SC5314 / ATCC MYA-2876) (Yeast) protein is Glycolipid 2-alpha-mannosyltransferase 1 (MNT1).